The chain runs to 140 residues: Holo-[acyl-carrier-protein] synthase (140 aa).

Mg(2+) contacts are provided by aspartate 9 and glutamate 63.

This sequence belongs to the P-Pant transferase superfamily. AcpS family. The cofactor is Mg(2+).

It is found in the cytoplasm. The enzyme catalyses apo-[ACP] + CoA = holo-[ACP] + adenosine 3',5'-bisphosphate + H(+). In terms of biological role, transfers the 4'-phosphopantetheine moiety from coenzyme A to a Ser of acyl-carrier-protein. This is Holo-[acyl-carrier-protein] synthase from Paraburkholderia phytofirmans (strain DSM 17436 / LMG 22146 / PsJN) (Burkholderia phytofirmans).